Consider the following 469-residue polypeptide: Cold shock protein CS66 (469 aa).

21 repeat units span residues 9-31 (GEKKGIMEKIKEKLPGGHGDHKE), 49-62 (TGGAYGQEGHTGTT), 72-94 (GEKKGVMENIKDKLPGGHADHQQ), 95-108 (TGGTYGQQGHTGTA), 115-128 (TGGTYGQQGHTGTA), 135-148 (TNGTYGEHGHTGTA), 149-162 (TGGSYGEQRHTGVT), 170-192 (GEKKSLMENIKEKLPGGHGDNQQ), 193-206 (TAGTYGQQGHFATG), 213-226 (TGGTYGEQGHAGVT), 234-256 (GEKKGLMENIKDKLPGGHGDHQQ), 257-270 (TGGTYGQQGHTGAA), 277-290 (GGGTYEQHGHTGMT), 298-320 (GGKKGVMENIKDKLPGGHSDNQQ), 321-334 (TGGAYEQQGHTGAA), 341-354 (SGGTYEQHGHTGMT), 362-384 (GEKKAVMENIKDKLPGGHGDHQQ), 385-398 (TGGAYGQQGHTGTA), 405-418 (GGGTYEQHGNTGMT), 428-441 (TGGTHGQHGHTGTT), and 452-469 (GEKKSLMDKIKDKLPGQH). The tract at residues 9–390 (GEKKGIMEKI…DHQQTGGAYG (382 aa)) is 7 X 23 AA approximate repeats. Residues 49 to 441 (TGGAYGQEGH…HGQHGHTGTT (393 aa)) are 14 X 14 AA approximate repeats. Residues 87–112 (GGHADHQQTGGTYGQQGHTGTATHGT) form a disordered region. Residues 93-112 (QQTGGTYGQQGHTGTATHGT) are compositionally biased toward low complexity. The span at 203–214 (FATGTHGTPATG) shows a compositional bias: low complexity. The tract at residues 203 to 469 (FATGTHGTPA…KIKDKLPGQH (267 aa)) is disordered. A compositionally biased stretch (basic and acidic residues) spans 233-254 (TGEKKGLMENIKDKLPGGHGDH). Residues 255 to 274 (QQTGGTYGQQGHTGAATHGT) are compositionally biased toward low complexity. Residues 288–301 (GMTGTGTHGTGGKK) are compositionally biased toward gly residues. Over residues 302–312 (GVMENIKDKLP) the composition is skewed to basic and acidic residues. A compositionally biased stretch (basic and acidic residues) spans 361–382 (TGEKKAVMENIKDKLPGGHGDH). Low complexity-rich tracts occupy residues 383 to 402 (QQTGGAYGQQGHTGTATHGT) and 412 to 429 (HGNTGMTGTETHGTTATG). Residues 439-450 (GTTGTGTHGTDG) are compositionally biased toward gly residues. Positions 451–469 (VGEKKSLMDKIKDKLPGQH) are enriched in basic and acidic residues.

Belongs to the plant dehydrin family.

Functionally, may reduce intracellular freezing damage during winter by hydrogen-bonding to the lattice of the nascent ice crystals, thus modifying the structure and/or propagation of ice crystals. This Triticum aestivum (Wheat) protein is Cold shock protein CS66 (CS66).